Reading from the N-terminus, the 257-residue chain is Receptor expression-enhancing protein 4 (257 aa).

2 consecutive transmembrane segments (helical) span residues 1–21 (MVSW…CPAY) and 42–62 (WIVF…ISWF). 2 positions are modified to phosphoserine: Ser-152 and Ser-194. Residues 178 to 257 (PHQRPPIGYR…KKTVPSDMDS (80 aa)) are disordered. Phosphothreonine is present on Thr-196. At Ser-202 the chain carries Phosphoserine. Thr-250 carries the post-translational modification Phosphothreonine. Ser-253 carries the phosphoserine modification.

Belongs to the DP1 family.

The protein localises to the endoplasmic reticulum membrane. In terms of biological role, microtubule-binding protein required to ensure proper cell division and nuclear envelope reassembly by sequestering the endoplasmic reticulum away from chromosomes during mitosis. Probably acts by clearing the endoplasmic reticulum membrane from metaphase chromosomes. The polypeptide is Receptor expression-enhancing protein 4 (REEP4) (Pongo abelii (Sumatran orangutan)).